Consider the following 89-residue polypeptide: Neurotoxin LmNaTx28 (89 aa).

A signal peptide spans 1–18 (MNLPTVLCIIALILGVRS). The LCN-type CS-alpha/beta domain maps to 20 to 85 (KNGFFTKLGK…VADSSEKACQ (66 aa)). Cystine bridges form between Cys33-Cys57, Cys43-Cys62, Cys47-Cys64, and Cys58-Cys84.

The protein belongs to the long (4 C-C) scorpion toxin superfamily. Sodium channel inhibitor family. Beta subfamily. Expressed by the venom gland.

The protein localises to the secreted. Its function is as follows. Binds voltage-independently at site-4 of sodium channels (Nav) and shift the voltage of activation toward more negative potentials thereby affecting sodium channel activation and promoting spontaneous and repetitive firing. The protein is Neurotoxin LmNaTx28 of Lychas mucronatus (Chinese swimming scorpion).